The primary structure comprises 713 residues: Subtilisin-like protease SBT4.9 (713 aa).

Residues 1–24 (MARRADSFCLISCVLVSFVISVSA) form the signal peptide. A propeptide spans 25–113 (VTDDSQDKQV…VFPDINYKLQ (89 aa)) (activation peptide). The Inhibitor I9 domain maps to 34 to 112 (VYVVYMGSLP…SVFPDINYKL (79 aa)). Positions 117 to 560 (SWDFLGLKEG…AGHVDPIAAI (444 aa)) constitute a Peptidase S8 domain. Residue D145 is the Charge relay system of the active site. N-linked (GlcNAc...) asparagine glycosylation occurs at N176. H200 serves as the catalytic Charge relay system. N-linked (GlcNAc...) asparagine glycosylation is found at N215 and N223. A PA domain is found at 356-415 (NYPLYGGSTDGPLLRGKILVSEDKVSSEIVVANINENYHDYAYVSILPSSALSKDDFDSV). N420 carries an N-linked (GlcNAc...) asparagine glycan. S499 acts as the Charge relay system in catalysis. N-linked (GlcNAc...) asparagine glycosylation is found at N536, N583, N627, and N637.

Belongs to the peptidase S8 family. Post-translationally, the C-terminal propeptide is autocleaved.

It localises to the secreted. The protein is Subtilisin-like protease SBT4.9 of Arabidopsis thaliana (Mouse-ear cress).